The primary structure comprises 864 residues: Leucine--tRNA ligase (864 aa).

The 'HIGH' region motif lies at 42–52 (PYPSGKLHMGH). Residues 624–628 (KMSKS) carry the 'KMSKS' region motif. Lysine 627 contributes to the ATP binding site.

The protein belongs to the class-I aminoacyl-tRNA synthetase family.

The protein localises to the cytoplasm. The enzyme catalyses tRNA(Leu) + L-leucine + ATP = L-leucyl-tRNA(Leu) + AMP + diphosphate. This chain is Leucine--tRNA ligase, found in Burkholderia mallei (strain ATCC 23344).